Consider the following 453-residue polypeptide: 5-hydroxytryptamine receptor 1 (453 aa).

Over 1–36 (MKSLKSSTHDVPHPEHVVWAPPAYDEQHHLFFSHGT) the chain is Extracellular. Residues 37 to 57 (VLIGIVGSLIITVAVVGNVLV) form a helical membrane-spanning segment. Topologically, residues 58–74 (CLAIFTEPILSHSKSNF) are cytoplasmic. The chain crosses the membrane as a helical span at residues 75-94 (FIVSLAVADLLLALLVMTFA). Topologically, residues 95–110 (LVNDMYGYWLFGETFC) are extracellular. Cysteine 110 and cysteine 225 are disulfide-bonded. Residues 111–133 (FIWMSADVMCETASIFSICVISY) traverse the membrane as a helical segment. The Cytoplasmic portion of the chain corresponds to 134 to 153 (DRLKQVQKPLHYEEFMTTTR). A helical transmembrane segment spans residues 154 to 175 (ALLIIACLWICSFVLSFVPIFL). Residues 176–223 (EWHELSVEEIKAIFKDNKTEKEKALEAHNFSSALNQTLGDNQKSNAKH) lie on the Extracellular side of the membrane. The helical transmembrane segment at 224–244 (VCLFDVHFTYSVIYSFICFYV) threads the bilayer. Topologically, residues 245–301 (PCTLMLTNYLRLFLIAQTHQVRIRSLQMTNPPQLRGQGASSYRNQGTQGSKAARTLT) are cytoplasmic. A helical membrane pass occupies residues 302-322 (IITGTFLACWLPFFIINPIAA). At 323 to 331 (ADEHLIPLE) the chain is on the extracellular side. A helical transmembrane segment spans residues 332–352 (CFMVTIWLGYFNSSVNPIIYG). Topologically, residues 353 to 453 (TSNSKFRAAF…VFDSDTAFSS (101 aa)) are cytoplasmic. The interval 397–428 (DLSSSEHPSDACDTGRGKNSKGGDCATADPTK) is disordered. Residues 403–412 (HPSDACDTGR) are compositionally biased toward basic and acidic residues.

Belongs to the G-protein coupled receptor 1 family. As to expression, reproductive system.

It is found in the cell membrane. Its function is as follows. This is one of the several different receptors for 5-hydroxytryptamine (serotonin). 5-HT plays important roles in various behavioral and physiological processes in aplysia. These include feeding, locomotion, circadian rhythm, learning and memory, synaptic plasticity, and synaptic growth. This receptor is mediated by G proteins that stimulate phospholipase C. This Aplysia californica (California sea hare) protein is 5-hydroxytryptamine receptor 1 (5HTB1).